The sequence spans 191 residues: MMPRLILASTSAYRRQLLSRLQLEFDTGRPEVDEQPQSGEAPSALASRLAAEKAAAVAVRLPGAWVIGSDQVADLDGQALGKPGTRAQAQAQLTAMSGRTVRFHTAVSLIGPERELHALDLTEVQLRALTPAEIERYLDAEPALDCAGSFKCEGLGISLFDAIRSQDPTALVGLPLIALARLLREAGFHLP.

The active-site Proton acceptor is the aspartate 70.

It belongs to the Maf family. YceF subfamily. It depends on a divalent metal cation as a cofactor.

Its subcellular location is the cytoplasm. The enzyme catalyses N(7)-methyl-GTP + H2O = N(7)-methyl-GMP + diphosphate + H(+). Its function is as follows. Nucleoside triphosphate pyrophosphatase that hydrolyzes 7-methyl-GTP (m(7)GTP). May have a dual role in cell division arrest and in preventing the incorporation of modified nucleotides into cellular nucleic acids. The protein is 7-methyl-GTP pyrophosphatase of Xanthomonas oryzae pv. oryzae (strain KACC10331 / KXO85).